Here is a 136-residue protein sequence, read N- to C-terminus: uncharacterized protein (136 aa).

It to E.coli YcgX and YdfO.

This is an uncharacterized protein from Escherichia coli (strain K12).